We begin with the raw amino-acid sequence, 355 residues long: Green-sensitive opsin (355 aa).

At 1–36 the chain is on the extracellular side; the sequence is MNGTEGINFYVPMSNKTGVVRSPFEYPQYYLAEPWK. 2 N-linked (GlcNAc...) asparagine glycosylation sites follow: asparagine 2 and asparagine 15. The helical transmembrane segment at 37-61 threads the bilayer; the sequence is YRLVCCYIFFLISTGLPINLLTLLV. At 62–73 the chain is on the cytoplasmic side; that stretch reads TFKHKKLRQPLN. Residues 74–99 form a helical membrane-spanning segment; that stretch reads YILVNLAVADLFMACFGFTVTFYTAW. At 100–113 the chain is on the extracellular side; it reads NGYFVFGPVGCAVE. Cysteine 110 and cysteine 187 form a disulfide bridge. Residues 114 to 133 traverse the membrane as a helical segment; that stretch reads GFFATLGGQVALWSLVVLAI. Over 134 to 152 the chain is Cytoplasmic; it reads ERYIVVCKPMGNFRFSATH. The helical transmembrane segment at 153-176 threads the bilayer; sequence AMMGIAFTWVMAFSCAAPPLFGWS. The Extracellular portion of the chain corresponds to 177 to 202; sequence RYMPEGMQCSCGPDYYTHNPDYHNES. Residues 203 to 230 form a helical membrane-spanning segment; sequence YVLYMFVIHFIIPVVVIFFSYGRLICKV. Residues 231-252 are Cytoplasmic-facing; it reads REAAAQQQESATTQKAEKEVTR. The helical transmembrane segment at 253–276 threads the bilayer; the sequence is MVILMVLGFMLAWTPYAVVAFWIF. At 277–284 the chain is on the extracellular side; sequence TNKGADFT. The chain crosses the membrane as a helical span at residues 285–309; sequence ATLMAVPAFFSKSSSLYNPIIYVLM. Lysine 296 is subject to N6-(retinylidene)lysine. Topologically, residues 310 to 355 are cytoplasmic; sequence NKQFRNCMITTICCGKNPFGDEDVSSTVSQSKTEVSSVSSSQVSPA.

This sequence belongs to the G-protein coupled receptor 1 family. Opsin subfamily. Post-translationally, phosphorylated on some or all of the serine and threonine residues present in the C-terminal region. As to expression, the color pigments are found in the cone photoreceptor cells.

Its subcellular location is the membrane. Functionally, visual pigments are the light-absorbing molecules that mediate vision. They consist of an apoprotein, opsin, covalently linked to cis-retinal. The polypeptide is Green-sensitive opsin (PRA1) (Gallus gallus (Chicken)).